Consider the following 833-residue polypeptide: RNA-binding protein 5-A (833 aa).

Residues M1 to D87 form a disordered region. Residues K102–P182 enclose the RRM 1 domain. Residues K185–E214 form a RanBP2-type zinc finger. The region spanning S241 to S325 is the RRM 2 domain. Residues T396 to Y428 show a composition bias toward polar residues. Disordered stretches follow at residues T396–A458 and A523–Q559. The segment covering Q429–A458 has biased composition (low complexity). Residues L667–H692 form a C2H2-type zinc finger. The 47-residue stretch at N761–S807 folds into the G-patch domain.

It belongs to the RBM5/RBM10 family. Component of the spliceosome A complex (also known as the prespliceosome). Appears to dissociate from the spliceosome upon formation of the spliceosome B complex (also known as the precatalytic spliceosome), in which the heterotrimeric U4/U6.U5 snRNPs are bound.

It is found in the nucleus. Functionally, component of the spliceosome A complex. Regulates alternative splicing of a number of mRNAs. May modulate splice site pairing after recruitment of the U1 and U2 snRNPs to the 5' and 3' splice sites of the intron. This Xenopus laevis (African clawed frog) protein is RNA-binding protein 5-A (rbm5-a).